The following is a 139-amino-acid chain: uncharacterized protein (139 aa).

This is an uncharacterized protein from Sputnik virophage.